A 100-amino-acid chain; its full sequence is Putative sodium channel toxin Ts26 (100 aa).

The N-terminal stretch at methionine 1–serine 22 is a signal peptide. The LCN-type CS-alpha/beta domain occupies arginine 24–glutamate 92. Cystine bridges form between cysteine 38–cysteine 64, cysteine 50–cysteine 69, cysteine 54–cysteine 71, and cysteine 65–cysteine 91.

The protein belongs to the long (4 C-C) scorpion toxin superfamily. Sodium channel inhibitor family. As to expression, expressed by the venom gland.

The protein resides in the secreted. Functionally, putative sodium channel toxin. This Tityus serrulatus (Brazilian scorpion) protein is Putative sodium channel toxin Ts26.